The following is a 203-amino-acid chain: 2-hydroxychromene-2-carboxylate isomerase (203 aa).

Ser-11 (nucleophile) is an active-site residue. Ser-11 is a binding site for glutathione. Residues Lys-43, 53-54 (NR), and Tyr-84 contribute to the substrate site. Residues Val-168 and 179-182 (WGND) each bind glutathione.

This sequence belongs to the GST superfamily. NadH family. Glutathione is required as a cofactor.

The catalysed reaction is 2-hydroxychromene-2-carboxylate = (3E)-4-(2-hydroxyphenyl)-2-oxobut-3-enoate. Its pathway is aromatic compound metabolism; naphthalene degradation. Its function is as follows. Involved in the naphthalene catabolic pathway. Catalyzes the reversible glutathione-dependent isomerization of 2-hydroxychromene-2-carboxylate (HCCA) to trans-O-hydroxybenzylidenepyruvate (THBPA). This chain is 2-hydroxychromene-2-carboxylate isomerase (nahD), found in Pseudomonas putida (Arthrobacter siderocapsulatus).